We begin with the raw amino-acid sequence, 177 residues long: Transcription antitermination protein NusB (177 aa).

The disordered stretch occupies residues 1–35 (MTDSTHPTPSARPPRQPRTGTTGTGARKAGSKSGR). Positions 17–28 (PRTGTTGTGARK) are enriched in low complexity.

The protein belongs to the NusB family.

Involved in transcription antitermination. Required for transcription of ribosomal RNA (rRNA) genes. Binds specifically to the boxA antiterminator sequence of the ribosomal RNA (rrn) operons. This is Transcription antitermination protein NusB from Acidovorax sp. (strain JS42).